Reading from the N-terminus, the 780-residue chain is Protein SEY1 (780 aa).

The Cytoplasmic segment spans residues 1-680 (MDSKEEAIQL…KRSMIKTTTH (680 aa)). The GB1/RHD3-type G domain occupies 35–265 (GVNYHVISVF…NEDYYFKPEY (231 aa)). 45-52 (GSQSSGKS) is a binding site for GTP. The stretch at 440 to 463 (EVKEEVVKRFENDLKETSDKLRVT) forms a coiled coil. The chain crosses the membrane as a helical span at residues 681 to 701 (IPLWIYAIIVVLGWNEFMMVI). At 702 to 704 (RNP) the chain is on the lumenal side. A helical transmembrane segment spans residues 705–725 (LFVTLTILILVSFYFINKFDL). The Cytoplasmic portion of the chain corresponds to 726 to 780 (WGPVKSVAQTAAGETIGTIKTKLRDFVLEEHEKTPKIQSEKSNSDSEKVVENEKS). A disordered region spans residues 756 to 780 (HEKTPKIQSEKSNSDSEKVVENEKS).

Belongs to the TRAFAC class dynamin-like GTPase superfamily. GB1/RHD3 GTPase family. RHD3 subfamily.

The protein resides in the endoplasmic reticulum membrane. Its function is as follows. Cooperates with the reticulon proteins and tubule-shaping DP1 family proteins to generate and maintain the structure of the tubular endoplasmic reticulum network. Has GTPase activity, which is required for its function in ER organization. This Vanderwaltozyma polyspora (strain ATCC 22028 / DSM 70294 / BCRC 21397 / CBS 2163 / NBRC 10782 / NRRL Y-8283 / UCD 57-17) (Kluyveromyces polysporus) protein is Protein SEY1.